Consider the following 241-residue polypeptide: Glutathione S-transferase theta-3 (241 aa).

Positions 2–82 constitute a GST N-terminal domain; it reads GLELYLDLMS…YLSRKYKAPD (81 aa). Glutathione contacts are provided by residues 53–54 and 66–67; these read KV and ES. The region spanning 88–222 is the GST C-terminal domain; the sequence is DLQTRARVDE…VVLKAKDMPP (135 aa).

It belongs to the GST superfamily. Theta family. As to quaternary structure, homodimer. In terms of tissue distribution, expressed strongly in liver, and at lower levels in kidney and testis.

Its subcellular location is the cytoplasm. It carries out the reaction RX + glutathione = an S-substituted glutathione + a halide anion + H(+). In terms of biological role, conjugation of reduced glutathione to a wide number of exogenous and endogenous hydrophobic electrophiles. Shows high activity towards 4-nitrobenzyl chloride (4-NBC). Also has lower activity towards 1,2-epoxy-3-(p-nitrophenoxy)propane (EPNP), cumene hydroperoxide, 1-chloro-2,4-dinitrobenzene (CDNB), 7-chloro-4-nitrobenzo-2-oxa-1,3-diazole (NBD-Cl), and ethacrynic acid. This chain is Glutathione S-transferase theta-3, found in Mus musculus (Mouse).